The sequence spans 280 residues: Monoacylglycerol lipase (280 aa).

Serine 111 functions as the Nucleophile in the catalytic mechanism. Residues aspartate 227 and histidine 257 each act as charge relay system in the active site.

This sequence belongs to the AB hydrolase superfamily.

Its subcellular location is the secreted. The protein localises to the cell wall. The enzyme catalyses Hydrolyzes glycerol monoesters of long-chain fatty acids.. Contributes to cell growth, probably by hydrolyzing exogenous lipids. Catalyzes the hydrolysis of monoacylglycerols (MAG) with fatty acid chains ranging from C14 to C18, with a maximum activity on monoolein. Is unable to hydrolyze long-chain diacylglycerol (DAG). This Mycolicibacterium smegmatis (strain ATCC 700084 / mc(2)155) (Mycobacterium smegmatis) protein is Monoacylglycerol lipase.